Consider the following 799-residue polypeptide: Zinc finger protein 227 (799 aa).

Residues 23 to 94 enclose the KRAB domain; it reads VTFKDVAVVF…ETETQRSSKH (72 aa). 19 C2H2-type zinc fingers span residues 250 to 272, 269 to 291, 324 to 346, 352 to 374, 380 to 402, 408 to 430, 436 to 458, 464 to 486, 492 to 514, 520 to 542, 548 to 570, 576 to 598, 604 to 626, 632 to 654, 660 to 682, 688 to 710, 716 to 738, 744 to 766, and 772 to 794; these read HPCGECGRGFSYSPRLPLHPNVH, PNVHTGEKCFSQSSHLRTHQRIH, YRCDSCGKGFSSSTGLIIHYRTH, YKCEECGKCFSQSSNFQCHQRVH, YKCEECGKGFGWSVNLRVHQRVH, YKCEECGKGFTQAAHFHIHQRVH, YKCDVCGKGFSHNSPLICHRRVH, YKCEACGKGFTRNTDLHIHFRVH, YKCKECGKGFSQASNLQVHQNVH, FKCETCGKGFSQSSKLQTHQRVH, YRCDVCGKDFSYSSNLKLHQVIH, YKCEECGKGFSWRSNLHAHQRVH, YKCEQCDKSFSQAIDFRVHQRVH, YKCGVCGKGFSQSSGLQSHQRVH, YKCDVCGKGFRYSSQFIYHQRGH, YKCEECGKGFGRSLNLRHHQRVH, HICEECGKAFSLPSNLRVHLGVH, FKCEECGKGFSQSARLEAHQRVH, and YKCDICDKDFRHRSRLTYHQKVH.

It belongs to the krueppel C2H2-type zinc-finger protein family.

It localises to the nucleus. May be involved in transcriptional regulation. The sequence is that of Zinc finger protein 227 (ZNF227) from Homo sapiens (Human).